We begin with the raw amino-acid sequence, 240 residues long: PF03932 family protein CutC (240 aa).

It belongs to the CutC family.

Its subcellular location is the cytoplasm. This chain is PF03932 family protein CutC, found in Xanthomonas campestris pv. campestris (strain 8004).